A 156-amino-acid polypeptide reads, in one-letter code: Endoribonuclease YbeY (156 aa).

3 residues coordinate Zn(2+): His122, His126, and His132.

Belongs to the endoribonuclease YbeY family. The cofactor is Zn(2+).

The protein resides in the cytoplasm. Its function is as follows. Single strand-specific metallo-endoribonuclease involved in late-stage 70S ribosome quality control and in maturation of the 3' terminus of the 16S rRNA. The chain is Endoribonuclease YbeY from Bacillus mycoides (strain KBAB4) (Bacillus weihenstephanensis).